The chain runs to 371 residues: Peptide chain release factor 2 (371 aa).

Gln253 carries the N5-methylglutamine modification.

The protein belongs to the prokaryotic/mitochondrial release factor family. Post-translationally, methylated by PrmC. Methylation increases the termination efficiency of RF2.

It is found in the cytoplasm. Peptide chain release factor 2 directs the termination of translation in response to the peptide chain termination codons UGA and UAA. This chain is Peptide chain release factor 2, found in Mycobacterium sp. (strain JLS).